The following is a 110-amino-acid chain: Iron-sulfur cluster assembly protein CyaY (110 aa).

The protein belongs to the frataxin family.

Involved in iron-sulfur (Fe-S) cluster assembly. May act as a regulator of Fe-S biogenesis. This chain is Iron-sulfur cluster assembly protein CyaY, found in Pseudomonas syringae pv. syringae (strain B728a).